Reading from the N-terminus, the 63-residue chain is Large ribosomal subunit protein bL32 (63 aa).

The tract at residues Met1–Val27 is disordered. Basic residues predominate over residues Lys7–Ala18.

Belongs to the bacterial ribosomal protein bL32 family.

The polypeptide is Large ribosomal subunit protein bL32 (Chlorobium phaeobacteroides (strain DSM 266 / SMG 266 / 2430)).